Reading from the N-terminus, the 819-residue chain is Zinc finger protein 658B (819 aa).

Residues 141–166 form a C2H2-type 1; degenerate zinc finger; sequence YLSDEHGKCRKSFYWKAHLIQHERPH. 14 C2H2-type zinc fingers span residues 200-222, 278-300, 306-328, 334-356, 362-384, 390-412, 418-440, 446-468, 474-496, 502-524, 530-552, 558-580, 586-608, and 614-636; these read YECN…LRIH, YECI…QRIH, YECV…QRVH, YECN…QRIH, YECS…HRIH, YECS…QRIH, YKCN…QNIH, YECS…RRIH, YECS…ERIH, and YECN…HRIH. The segment at 642-664 adopts a C2H2-type 16; degenerate zinc-finger fold; it reads YECNDCGKTFSKTSHLRAHLRTR. 5 consecutive C2H2-type zinc fingers follow at residues 670–692, 698–720, 726–748, 754–776, and 782–805; these read YECS…QRVH, YECN…QRIH, and YECD…TRMH.

This sequence belongs to the krueppel C2H2-type zinc-finger protein family.

Its subcellular location is the nucleus. May be involved in transcriptional regulation. The polypeptide is Zinc finger protein 658B (ZNF658B) (Homo sapiens (Human)).